The following is a 521-amino-acid chain: Outer membrane protein assembly factor BamB (521 aa).

The N-terminal stretch at 1–19 is a signal peptide; that stretch reads MKKLFLVIVPLLLSLLATS. A lipid anchor (N-palmitoyl cysteine) is attached at C20. C20 carries S-diacylglycerol cysteine lipidation. The interval 418-521 is disordered; sequence KSGSIESSPK…IGDFSKGDSD (104 aa). Basic and acidic residues predominate over residues 429-444; the sequence is LPDKKVDSNKTSKNDT. Residues 445-477 show a composition bias toward polar residues; it reads DSNPATTATSTKDIQNPANQEMINSTPVSNTST.

Belongs to the BamB family. Part of the Bam complex.

The protein resides in the cell outer membrane. Its function is as follows. Part of the outer membrane protein assembly complex, which is involved in assembly and insertion of beta-barrel proteins into the outer membrane. The sequence is that of Outer membrane protein assembly factor BamB from Francisella salina.